Here is a 194-residue protein sequence, read N- to C-terminus: Large ribosomal subunit protein bL9 (194 aa).

Positions 166 to 184 are enriched in low complexity; it reads AENQAQADEQAGELAAAAA. The segment at 166–194 is disordered; the sequence is AENQAQADEQAGELAAAAAERGDMGGDEE. Residues 185–194 are compositionally biased toward basic and acidic residues; it reads ERGDMGGDEE.

Belongs to the bacterial ribosomal protein bL9 family.

Its function is as follows. Binds to the 23S rRNA. In Hyphomonas neptunium (strain ATCC 15444), this protein is Large ribosomal subunit protein bL9.